The primary structure comprises 75 residues: Large ribosomal subunit protein bL31 (75 aa).

The protein belongs to the bacterial ribosomal protein bL31 family. Type A subfamily. Part of the 50S ribosomal subunit.

In terms of biological role, binds the 23S rRNA. In Chlorobium limicola (strain DSM 245 / NBRC 103803 / 6330), this protein is Large ribosomal subunit protein bL31.